The following is a 333-amino-acid chain: 4-hydroxythreonine-4-phosphate dehydrogenase (333 aa).

Residues His136 and Thr137 each coordinate substrate. Positions 166, 211, and 266 each coordinate a divalent metal cation. Residues Lys274, Asn283, and Arg292 each contribute to the substrate site.

Belongs to the PdxA family. As to quaternary structure, homodimer. Zn(2+) serves as cofactor. It depends on Mg(2+) as a cofactor. Requires Co(2+) as cofactor.

The protein resides in the cytoplasm. It catalyses the reaction 4-(phosphooxy)-L-threonine + NAD(+) = 3-amino-2-oxopropyl phosphate + CO2 + NADH. Its pathway is cofactor biosynthesis; pyridoxine 5'-phosphate biosynthesis; pyridoxine 5'-phosphate from D-erythrose 4-phosphate: step 4/5. Its function is as follows. Catalyzes the NAD(P)-dependent oxidation of 4-(phosphooxy)-L-threonine (HTP) into 2-amino-3-oxo-4-(phosphooxy)butyric acid which spontaneously decarboxylates to form 3-amino-2-oxopropyl phosphate (AHAP). In Acidithiobacillus ferrooxidans (strain ATCC 23270 / DSM 14882 / CIP 104768 / NCIMB 8455) (Ferrobacillus ferrooxidans (strain ATCC 23270)), this protein is 4-hydroxythreonine-4-phosphate dehydrogenase.